Consider the following 540-residue polypeptide: H(+)/hexose cotransporter 2 (540 aa).

The Cytoplasmic portion of the chain corresponds to 1–29 (MAGGGPVASTTTNRASQYGYARGGLNWYI). The helical transmembrane segment at 30-50 (FIVALTAGSGGLLFGYDIGVT) threads the bilayer. Residues 51–90 (GGVTSMPEFLQKFFPSIYDRTQQPSDSKDPYCTYDDQKLQ) lie on the Extracellular side of the membrane. A helical transmembrane segment spans residues 91–111 (LFTSSFFLAGMFVSFFAGSVV). The Cytoplasmic segment spans residues 112–124 (RRWGRKPTMLIAS). The chain crosses the membrane as a helical span at residues 125–135 (VLFLAGAGLNA). Over 136-147 (GAQDLAMLVIGR) the chain is Extracellular. A helical membrane pass occupies residues 148–168 (VLLGFGVGGGNNAVPLYLSEC). Residues 169 to 176 (APPKYRGG) lie on the Cytoplasmic side of the membrane. A helical transmembrane segment spans residues 177–197 (LNMMFQLAVTIGIIVAQLVNY). Over 198–207 (GTQTMNNGWR) the chain is Extracellular. The helical transmembrane segment at 208–228 (LSLGLAGVPAIILLIGSLLLP) threads the bilayer. The Cytoplasmic segment spans residues 229–296 (ETPNSLIERG…YSPMLIVTSL (68 aa)). A helical membrane pass occupies residues 297-317 (IAMLQQLTGINAIMFYVPVLF). Topologically, residues 318–326 (SSFGTARHA) are extracellular. The chain crosses the membrane as a helical span at residues 327–337 (ALLNTVIIGAV). The Cytoplasmic segment spans residues 338–355 (NVAATFVSIFSVDKFGRR). Residues 356 to 376 (GLFLEGGIQMFIGQVVTAAVL) form a helical membrane-spanning segment. Residues 377–396 (GVELNKYGTNLPSSTAAGVL) lie on the Extracellular side of the membrane. A helical transmembrane segment spans residues 397–417 (VVICVYVAAFAWSWGPLGWLV). At 418–435 (PSEIQTLETRGAGMSMAV) the chain is on the cytoplasmic side. A helical transmembrane segment spans residues 436–456 (IVNFLFSFVIGQAFLSMMCAM). Residues 457-458 (RW) are Extracellular-facing. A helical membrane pass occupies residues 459–479 (GVFLFFAGWVVIMTFFVYFCL). At 480–540 (PETKGVPVET…SEDGKPASDQ (61 aa)) the chain is on the cytoplasmic side.

This sequence belongs to the major facilitator superfamily. Sugar transporter (TC 2.A.1.1) family.

Its subcellular location is the membrane. Its function is as follows. Active uptake of galactose. The polypeptide is H(+)/hexose cotransporter 2 (HUP2) (Parachlorella kessleri (Green alga)).